Reading from the N-terminus, the 429-residue chain is MGLKLNISNDLKKSGFMLRQSLLKTSVSNFLSLNASSTMSRAFIRNPKFYSTSSNDTVLYESKNGARIFTLNRPKVLNAINVDMIDSILPKLVSLEESNLAKVIILKGNGRSFSSGGDIKAAALSIQDGKLPEVRHAFAQEYRLSHTLATYQKPVVALMNGITMGGGSGLAMHVPFRIACEDTMFAMPETGIGYFTDVAASFFFSRLPGYFGTYLGLTSQIVKGYDCLRTGIATHFVPKHMFPHLEDRLAELNTSDISKINNTILEFAEFASSSPPTFTPDVMDVINKCFCKNDTVDIIRALKEYASNTSALAEFAKSTVKTLYSKSPTSIAVTNRLIKSAAKWSISEAFYYDHIVSYYMLKQPDFVEGVNAQLITKTKNPKWSKSHEYHFKDLENYFKLPSEYNNGISFAAKGRRKTPLWNYKTYPYL.

Positions 141, 166, 189, and 197 each coordinate substrate.

Belongs to the enoyl-CoA hydratase/isomerase family. Mitochondrion-specific ribosomal protein mS47 subfamily. In terms of assembly, component of the mitochondrial small ribosomal subunit (mt-SSU). Mature yeast 74S mitochondrial ribosomes consist of a small (37S) and a large (54S) subunit. The 37S small subunit contains a 15S ribosomal RNA (15S mt-rRNA) and at least 32 different proteins. The 54S large subunit contains a 21S rRNA (21S mt-rRNA) and at least 45 different proteins. mS47/snr1 forms a protuberance of the yeast mitoribosome and retains a solvent-exposed cavity likely capable of accommodating a substrate, in accordance with it being an active enzyme as well as an integral constituent of the mitoribosome.

It is found in the mitochondrion. It carries out the reaction 3-hydroxy-2-methylpropanoyl-CoA + H2O = 3-hydroxy-2-methylpropanoate + CoA + H(+). The protein operates within amino-acid degradation; L-valine degradation. Functionally, component of the mitochondrial ribosome (mitoribosome), a dedicated translation machinery responsible for the synthesis of mitochondrial genome-encoded proteins, including at least some of the essential transmembrane subunits of the mitochondrial respiratory chain. The mitoribosomes are attached to the mitochondrial inner membrane and translation products are cotranslationally integrated into the membrane. mS47/snr1 has enzymatic activity in vitro, and is able to catalyze the specific hydrolysis of 3-hydroxyisobutyryl-CoA (HIBYL-CoA). However, because the turnover rate of mS47/snr1 is only a fraction of that of the homologous mammalian enzyme, the physiological function of this activity remains unclear. Has an indirect role in endocytic membrane trafficking. In Schizosaccharomyces pombe (strain 972 / ATCC 24843) (Fission yeast), this protein is Small ribosomal subunit protein mS47 (snr1).